A 208-amino-acid chain; its full sequence is Fusaric acid resistance protein FusD (208 aa).

A helical membrane pass occupies residues 7–29; the sequence is LLLSMLVSAIAFAVLFPPTAPWL.

It is found in the cell membrane. Involved in the resistance (detoxification) of the fungal toxin fusaric acid. This is Fusaric acid resistance protein FusD (fusD) from Burkholderia cepacia (Pseudomonas cepacia).